The chain runs to 721 residues: Zinc-transporting ATPase (721 aa).

The Cytoplasmic portion of the chain corresponds to 1–107 (MTQSSPLKTQ…HSHGAGEFNL (107 aa)). Positions 8–74 (KTQQMQVGGM…RIAALGYTLA (67 aa)) constitute an HMA domain. Residues C19 and C22 each coordinate Zn(2+). The segment at 80 to 101 (VTLNGHKHPHSHREEGHSHSHG) is disordered. The chain crosses the membrane as a helical span at residues 108–128 (KQELLPVLTAIALFTIAILFE). Over 129–140 (QPLHNTPGQIAE) the chain is Extracellular. The helical transmembrane segment at 141-160 (FAVIIPAYLLSGWTVLKTAG) threads the bilayer. The Cytoplasmic segment spans residues 161–167 (RNILRGQ). The chain crosses the membrane as a helical span at residues 168-187 (IFDENFLMTIATLGALAIHQ). Residues 188–190 (LPE) lie on the Extracellular side of the membrane. A helical transmembrane segment spans residues 191 to 210 (AVAVMLFFRVGELFQEYSVG). Over 211-344 (RSRRSIKALL…ITQFARYYTP (134 aa)) the chain is Cytoplasmic. Residues 345 to 363 (VIVFLSLAVALLPPLFIPG) form a helical membrane-spanning segment. The Extracellular segment spans residues 364-369 (ADRADW). A helical membrane pass occupies residues 370–387 (VYRALVLLVISCPCGLVI). Residues 388–671 (SIPLGYFGGI…AIHVARKTRQ (284 aa)) are Cytoplasmic-facing. The active-site 4-aspartylphosphate intermediate is D425. Mg(2+) contacts are provided by D618 and D622. A helical transmembrane segment spans residues 672–693 (IVVQNIVLALGIKALFIALGTI). Over 694–701 (GLATLWEA) the chain is Extracellular. Residues 702–717 (VFADVGVALLAILNAT) traverse the membrane as a helical segment. Residues 718–721 (RIAK) lie on the Cytoplasmic side of the membrane.

Belongs to the cation transport ATPase (P-type) (TC 3.A.3) family. Type IB subfamily.

The protein resides in the cell membrane. It catalyses the reaction Zn(2+)(in) + ATP + H2O = Zn(2+)(out) + ADP + phosphate + H(+). This is Zinc-transporting ATPase (ziaA) from Synechocystis sp. (strain ATCC 27184 / PCC 6803 / Kazusa).